We begin with the raw amino-acid sequence, 877 residues long: Phosphoenolpyruvate carboxylase (877 aa).

Catalysis depends on residues His-138 and Lys-544.

Belongs to the PEPCase type 1 family. Mg(2+) is required as a cofactor.

The catalysed reaction is oxaloacetate + phosphate = phosphoenolpyruvate + hydrogencarbonate. Its function is as follows. Forms oxaloacetate, a four-carbon dicarboxylic acid source for the tricarboxylic acid cycle. The polypeptide is Phosphoenolpyruvate carboxylase (Vibrio parahaemolyticus serotype O3:K6 (strain RIMD 2210633)).